Reading from the N-terminus, the 203-residue chain is Dual-action ribosomal maturation protein DarP (203 aa).

Residues 1-13 are compositionally biased toward polar residues; that stretch reads MQPMTRNSRNSPG. The disordered stretch occupies residues 1–39; sequence MQPMTRNSRNSPGSRFPGAFAPEPDMDEPKSKSQKKRDM. Over residues 27–39 the composition is skewed to basic and acidic residues; the sequence is DEPKSKSQKKRDM.

It belongs to the DarP family.

Its subcellular location is the cytoplasm. In terms of biological role, member of a network of 50S ribosomal subunit biogenesis factors which assembles along the 30S-50S interface, preventing incorrect 23S rRNA structures from forming. Promotes peptidyl transferase center (PTC) maturation. This Cupriavidus pinatubonensis (strain JMP 134 / LMG 1197) (Cupriavidus necator (strain JMP 134)) protein is Dual-action ribosomal maturation protein DarP.